Reading from the N-terminus, the 182-residue chain is Pyruvoyl-dependent arginine decarboxylase (182 aa).

S44 carries the pyruvic acid (Ser) modification.

It belongs to the PdaD family. Pyruvate serves as cofactor.

It catalyses the reaction L-arginine + H(+) = agmatine + CO2. This is Pyruvoyl-dependent arginine decarboxylase from Thermoplasma volcanium (strain ATCC 51530 / DSM 4299 / JCM 9571 / NBRC 15438 / GSS1).